The sequence spans 560 residues: Vacuolar protein 8 (560 aa).

A lipid anchor (N-myristoyl glycine) is attached at G2. C4 carries S-palmitoyl cysteine lipidation. 9 ARM repeats span residues 39–76 (NRAE…FAEI), 77–116 (TERD…NLAV), 118–157 (TDNK…NLAT), 159–198 (EENK…NMTH), 200–239 (DENR…NIAV), 243–282 (NRRK…NLAS), 284–323 (EKYQ…NISI), 325–365 (PQNE…NLAA), and 409–448 (DELK…NLSS).

This sequence belongs to the beta-catenin family.

The protein localises to the vacuole membrane. Its function is as follows. Functions in both vacuole inheritance and protein targeting from the cytoplasm to vacuole. This Chaetomium globosum (strain ATCC 6205 / CBS 148.51 / DSM 1962 / NBRC 6347 / NRRL 1970) (Soil fungus) protein is Vacuolar protein 8 (VAC8).